An 837-amino-acid polypeptide reads, in one-letter code: Translation initiation factor IF-2 (837 aa).

2 disordered regions span residues 1-44 and 62-251; these read MTEK…VRKS and KAQE…TKPA. Basic and acidic residues-rich tracts occupy residues 62–102 and 111–165; these read KAQE…EAKP and ADPE…HNDS. Over residues 189 to 205 the composition is skewed to basic residues; the sequence is RENHIRTGKNKVTKAKK. The span at 206 to 229 shows a compositional bias: basic and acidic residues; that stretch reads GGRDDNGSKDERSADRRNQKDMRG. The span at 242–251 shows a compositional bias: polar residues; that stretch reads TLQQAFTKPA. Positions 337–506 constitute a tr-type G domain; sequence QRAPVVTIMG…LLQSEVLELT (170 aa). Residues 346–353 form a G1 region; that stretch reads GHVDHGKT. 346-353 serves as a coordination point for GTP; the sequence is GHVDHGKT. Positions 371-375 are G2; the sequence is GITQH. Positions 392 to 395 are G3; it reads DTPG. Residues 392–396 and 446–449 contribute to the GTP site; these read DTPGH and NKID. Residues 446-449 form a G4 region; sequence NKID. A G5 region spans residues 482-484; it reads SAK.

This sequence belongs to the TRAFAC class translation factor GTPase superfamily. Classic translation factor GTPase family. IF-2 subfamily.

The protein localises to the cytoplasm. One of the essential components for the initiation of protein synthesis. Protects formylmethionyl-tRNA from spontaneous hydrolysis and promotes its binding to the 30S ribosomal subunits. Also involved in the hydrolysis of GTP during the formation of the 70S ribosomal complex. The polypeptide is Translation initiation factor IF-2 (Actinobacillus succinogenes (strain ATCC 55618 / DSM 22257 / CCUG 43843 / 130Z)).